The primary structure comprises 394 residues: Homoserine O-succinyltransferase (394 aa).

Positions 54–368 (NAVLICHALS…SSPAGHDAFL (315 aa)) constitute an AB hydrolase-1 domain. Serine 160 serves as the catalytic Nucleophile. Residue arginine 236 participates in substrate binding. Catalysis depends on residues aspartate 331 and histidine 364. Aspartate 365 contacts substrate.

This sequence belongs to the AB hydrolase superfamily. MetX family. As to quaternary structure, homodimer.

Its subcellular location is the cytoplasm. The enzyme catalyses L-homoserine + succinyl-CoA = O-succinyl-L-homoserine + CoA. Its pathway is amino-acid biosynthesis; L-methionine biosynthesis via de novo pathway; O-succinyl-L-homoserine from L-homoserine: step 1/1. Transfers a succinyl group from succinyl-CoA to L-homoserine, forming succinyl-L-homoserine. The polypeptide is Homoserine O-succinyltransferase (Magnetococcus marinus (strain ATCC BAA-1437 / JCM 17883 / MC-1)).